The primary structure comprises 261 residues: Transcription factor BEE 3 (261 aa).

Residues 72 to 82 (NIQNNEESSSQ) show a composition bias toward low complexity. Disordered stretches follow at residues 72–158 (NIQN…TDSH) and 242–261 (VEMGQGRDGSSVFHSSSWTL). Positions 95 to 123 (VSTSENSVSDQTLSTSSAQVSINGNISTK) are enriched in polar residues. Residues 135–146 (NREEEKEREVVH) show a composition bias toward basic and acidic residues. One can recognise a bHLH domain in the interval 153–203 (QATDSHSIAERVRRGKINERLKCLQDIVPGCYKTMGMATMLDEIINYVQSL).

In terms of assembly, homodimer. In terms of tissue distribution, expressed in stems.

It localises to the nucleus. Functionally, positive regulator of brassinosteroid signaling. The polypeptide is Transcription factor BEE 3 (BEE3) (Arabidopsis thaliana (Mouse-ear cress)).